A 380-amino-acid chain; its full sequence is ATP phosphoribosyltransferase regulatory subunit (380 aa).

Belongs to the class-II aminoacyl-tRNA synthetase family. HisZ subfamily. As to quaternary structure, heteromultimer composed of HisG and HisZ subunits.

It is found in the cytoplasm. The protein operates within amino-acid biosynthesis; L-histidine biosynthesis; L-histidine from 5-phospho-alpha-D-ribose 1-diphosphate: step 1/9. Required for the first step of histidine biosynthesis. May allow the feedback regulation of ATP phosphoribosyltransferase activity by histidine. This Thermoanaerobacter sp. (strain X514) protein is ATP phosphoribosyltransferase regulatory subunit.